Here is a 419-residue protein sequence, read N- to C-terminus: Transcription termination factor Rho (419 aa).

The region spanning 48-123 (DIFGDGVLEI…LKVNAVNYDK (76 aa)) is the Rho RNA-BD domain. RNA-binding stretches follow at residues 61–66 (GFGFLR), 78–80 (DIY), and 108–110 (ERY). ATP-binding positions include 169–174 (GRGQRG), 181–186 (KAGKTI), and arginine 212. Positions 284–288 (VLTGG) are RNA-binding 2.

The protein belongs to the Rho family. As to quaternary structure, homohexamer. The homohexamer assembles into an open ring structure.

Its function is as follows. Facilitates transcription termination by a mechanism that involves Rho binding to the nascent RNA, activation of Rho's RNA-dependent ATPase activity, and release of the mRNA from the DNA template. This is Transcription termination factor Rho from Buchnera aphidicola subsp. Schizaphis graminum (strain Sg).